Here is a 367-residue protein sequence, read N- to C-terminus: Putative ionic transporter y4hA (367 aa).

11 helical membrane passes run 12–32 (VPLW…MTLA), 39–59 (SVVL…ASVH), 74–94 (AILL…SLML), 108–128 (VFAA…VLGG), 143–163 (AALA…NFVT), 172–192 (AIQL…FLFV), 221–241 (LAAG…AMLL), 249–269 (VEAL…VVLL), 291–311 (VLGS…AISV), 318–338 (ALGL…VGTI), and 347–367 (VLQG…SAIP).

The protein belongs to the Ca(2+):cation antiporter (CaCA) (TC 2.A.19) family.

It is found in the cell membrane. In terms of biological role, possible cation transporter. This chain is Putative ionic transporter y4hA, found in Sinorhizobium fredii (strain NBRC 101917 / NGR234).